Here is a 424-residue protein sequence, read N- to C-terminus: Phosphoribosylamine--glycine ligase (424 aa).

The 202-residue stretch at 111 to 312 folds into the ATP-grasp domain; it reads KAFVKECGIK…LLDLCLATAK (202 aa). 137–189 is a binding site for ATP; it reads IQNASFPLVIKALNKNTSIVYQEEEAIKILEDAFKQSNEPVIIEPFLEGFELS.

This sequence belongs to the GARS family.

The enzyme catalyses 5-phospho-beta-D-ribosylamine + glycine + ATP = N(1)-(5-phospho-beta-D-ribosyl)glycinamide + ADP + phosphate + H(+). The protein operates within purine metabolism; IMP biosynthesis via de novo pathway; N(1)-(5-phospho-D-ribosyl)glycinamide from 5-phospho-alpha-D-ribose 1-diphosphate: step 2/2. This Helicobacter pylori (strain ATCC 700392 / 26695) (Campylobacter pylori) protein is Phosphoribosylamine--glycine ligase (purD).